We begin with the raw amino-acid sequence, 216 residues long: FMN-dependent NADH:quinone oxidoreductase 2 (216 aa).

FMN-binding positions include Ser-9, 15 to 17 (SVS), 96 to 99 (MYNF), and 140 to 143 (SRGG).

This sequence belongs to the azoreductase type 1 family. Homodimer. FMN is required as a cofactor.

The enzyme catalyses 2 a quinone + NADH + H(+) = 2 a 1,4-benzosemiquinone + NAD(+). It carries out the reaction N,N-dimethyl-1,4-phenylenediamine + anthranilate + 2 NAD(+) = 2-(4-dimethylaminophenyl)diazenylbenzoate + 2 NADH + 2 H(+). Functionally, quinone reductase that provides resistance to thiol-specific stress caused by electrophilic quinones. Also exhibits azoreductase activity. Catalyzes the reductive cleavage of the azo bond in aromatic azo compounds to the corresponding amines. The chain is FMN-dependent NADH:quinone oxidoreductase 2 from Xanthomonas axonopodis pv. citri (strain 306).